We begin with the raw amino-acid sequence, 700 residues long: Kin of IRRE-like protein 2 (700 aa).

An N-terminal signal peptide occupies residues 1-19 (MLASALLVFLCCFKGHAGS). Residues 20-507 (SPHFLQQPED…GRRDLLPTVR (488 aa)) are Extracellular-facing. Ig-like C2-type domains follow at residues 21–115 (PHFL…AQLH), 120–219 (PEAP…VTLS), 224–304 (PMVT…TALE), 309–391 (PILQ…ARLT), and 395–497 (PPVV…QIHL). A disulfide bridge links Cys42 with Cys100. An N-linked (GlcNAc...) asparagine glycan is attached at Asn140. 2 cysteine pairs are disulfide-bonded: Cys143–Cys201 and Cys245–Cys288. The short motif at 146–148 (RGD) is the Cell attachment site element. Residue Asn298 is glycosylated (N-linked (GlcNAc...) asparagine). Disulfide bonds link Cys330/Cys372 and Cys416/Cys482. N-linked (GlcNAc...) asparagine glycosylation occurs at Asn481. The helical transmembrane segment at 508–528 (IVAGAASAATSLLMVITGVVL) threads the bilayer. At 529–700 (CCWRHGSLSK…PSHQRLQTHV (172 aa)) the chain is on the cytoplasmic side. The tract at residues 542 to 576 (LVRIPGSSEGSSSRGPEEETGSSEDRGPIVHTDHS) is disordered. At Ser563 the chain carries Phosphoserine. Basic and acidic residues predominate over residues 564–576 (SEDRGPIVHTDHS). A phosphotyrosine mark is found at Tyr595, Tyr596, and Tyr653. The interval 671–700 (FGPPELSSGTPPFPYATLSPPSHQRLQTHV) is disordered. Residues 689–700 (SPPSHQRLQTHV) show a composition bias toward polar residues.

Belongs to the immunoglobulin superfamily. Homodimer. Interacts with NPHS2/podocin (via the C-terminus). Interacts with NPHS1 (via the Ig-like domains). Interacts with FYN. N-glycosylated. Post-translationally, phosphorylated at Ser-548 or Ser-549; due to site ambiguity, the exact position of the serine phosphorylation could not be determined. Phosphorylation at residues Tyr-631 and/or Tyr-632. FYN mediates tyrosine phosphorylation in pancreatic beta-cells. In terms of processing, the extracellular domain is cleaved leading to the generation of a soluble fragment and a membrane-bound C-terminal fragment, which is further cleaved by gamma-secretase. In terms of tissue distribution, highly expressed in beta-cells of the pancreatic islets. Expression is seen in podocytes of kidney glomeruli, and in the cerebellum and hindbrain at 12.5 dpc, in the spinal cord at 10.5 dpc, and in retina and hypothalamus at 13.5 dpc.

It is found in the cell membrane. In terms of biological role, may regulate basal insulin secretion. The protein is Kin of IRRE-like protein 2 (Kirrel2) of Mus musculus (Mouse).